The following is a 199-amino-acid chain: Phosphoheptose isomerase (199 aa).

Residues 36-198 enclose the SIS domain; it reads MSQCLLNEHK…DRKLIPSSED (163 aa). Position 51 to 53 (51 to 53) interacts with substrate; sequence NGG. Positions 60 and 64 each coordinate Zn(2+). Residues E64, 93 to 94, 119 to 121, S124, and Q174 contribute to the substrate site; these read ND and STS. Zn(2+) is bound by residues Q174 and H182.

It belongs to the SIS family. GmhA subfamily. As to quaternary structure, homotetramer. Zn(2+) serves as cofactor.

It localises to the cytoplasm. The catalysed reaction is 2 D-sedoheptulose 7-phosphate = D-glycero-alpha-D-manno-heptose 7-phosphate + D-glycero-beta-D-manno-heptose 7-phosphate. The protein operates within carbohydrate biosynthesis; D-glycero-D-manno-heptose 7-phosphate biosynthesis; D-glycero-alpha-D-manno-heptose 7-phosphate and D-glycero-beta-D-manno-heptose 7-phosphate from sedoheptulose 7-phosphate: step 1/1. Its function is as follows. Catalyzes the isomerization of sedoheptulose 7-phosphate in D-glycero-D-manno-heptose 7-phosphate. The chain is Phosphoheptose isomerase from Coxiella burnetii (strain RSA 331 / Henzerling II).